Consider the following 3301-residue polypeptide: Cadherin EGF LAG seven-pass G-type receptor 3 (3301 aa).

An N-terminal signal peptide occupies residues 1-31 (MARRPLWWGLPGPSTPVLLLLLLSLFPFSRE). The Extracellular segment spans residues 32–2531 (ELGGGGDQDW…RLEGDLELLA (2500 aa)). Disordered regions lie at residues 148–189 (LPLD…ARRS) and 202–314 (KLWE…NRHP). Basic residues predominate over residues 267–276 (MRSRGLFRRR). Cadherin domains follow at residues 317-424 (PQYN…APVF), 425-536 (EQAQ…APQF), 537-642 (SEKR…APIF), 643-747 (VSTP…RPEF), 748-849 (TMKE…RPVF), 850-952 (QSAH…APQF), 953-1058 (VASH…APVF), 1059-1160 (PAEE…SPVL), and 1161-1257 (NNFQ…VVII). N-linked (GlcNAc...) asparagine glycosylation is present at Asn623. A glycan (N-linked (GlcNAc...) asparagine) is linked at Asn838. Asn1173, Asn1213, Asn1308, and Asn1318 each carry an N-linked (GlcNAc...) asparagine glycan. The 59-residue stretch at 1366 to 1424 (DDNVCLREPCENYMKCVSVLRFDSSAPFLASTSTLFRPIQPIAGLRCRCPPGFTGDFCE) folds into the EGF-like 1; calcium-binding domain. 9 disulfides stabilise this stretch: Cys1370–Cys1381, Cys1375–Cys1412, Cys1414–Cys1423, Cys1430–Cys1441, Cys1435–Cys1450, Cys1452–Cys1459, Cys1468–Cys1479, Cys1473–Cys1489, and Cys1491–Cys1502. An EGF-like 2; calcium-binding domain is found at 1426 to 1460 (ELDLCYSNPCRNGGACARREGGYTCVCRPRFTDCE). The region spanning 1464 to 1503 (EAGRCVPGVCRNGGTCTNAPNGGFRCQCPAGGAFEGPRCE) is the EGF-like 3; calcium-binding domain. Positions 1504-1708 (VAARSFPPSS…VANNGTMAGC (205 aa)) constitute a Laminin G-like 1 domain. N-linked (GlcNAc...) asparagine glycans are attached at residues Asn1638 and Asn1702. 4 disulfide bridges follow: Cys1682–Cys1708, Cys1715–Cys1726, Cys1720–Cys1735, and Cys1737–Cys1746. The 37-residue stretch at 1711 to 1747 (KSHFCASGPCKNNGFCSERWGGFSCDCPVGFGGKDCR) folds into the EGF-like 4; calcium-binding domain. The Laminin G-like 2 domain occupies 1751–1933 (AHPYHFQGNG…SHRVNVEPGC (183 aa)). The N-linked (GlcNAc...) asparagine glycan is linked to Asn1759. Cystine bridges form between Cys1904-Cys1933, Cys1939-Cys1950, Cys1944-Cys1959, Cys1961-Cys1970, Cys1974-Cys1985, Cys1979-Cys1997, Cys1999-Cys2008, Cys2016-Cys2029, and Cys2031-Cys2041. The EGF-like 5; calcium-binding domain maps to 1935-1971 (VTNPCASGPCPPHADCKDLWQTFSCTCRPGYYGPGCV). Position 1952 is a (3R)-3-hydroxyaspartate (Asp1952). One can recognise an EGF-like 6; calcium-binding domain in the interval 1972–2002 (DACLLNPCQNQGSCRHLQGAPHGYTCDCVSG). The EGF-like 7; calcium-binding domain maps to 2003–2042 (YFGQHCEHRVDQQCPRGWWGSPTCGPCNCDVHKGFDPNCN). Asn2042 is a glycosylation site (N-linked (GlcNAc...) asparagine). The 36-residue stretch at 2044–2079 (TNGQCHCKEFHYRPRGSDSCLPCDCYPVGSTSRSCA) folds into the EGF-like 8; calcium-binding domain. Cystine bridges form between Cys2048/Cys2063, Cys2050/Cys2066, Cys2068/Cys2078, Cys2087/Cys2096, and Cys2099/Cys2111. The 48-residue stretch at 2066–2113 (CDCYPVGSTSRSCAPHSGQCPCRPGALGRQCNSCDSPFAEVTASGCRV) folds into the Laminin EGF-like domain. Tyr2115 carries the phosphotyrosine modification. 5 N-linked (GlcNAc...) asparagine glycosylation sites follow: Asn2166, Asn2185, Asn2375, Asn2465, and Asn2497. The tract at residues 2353-2388 (LLPSQASQPSPSEVLPTSSNAENATASSVVSPPAPL) is disordered. Low complexity predominate over residues 2355–2383 (PSQASQPSPSEVLPTSSNAENATASSVVS). Residues 2357-2521 (QASQPSPSEV…GVLMDASPRE (165 aa)) form the GAIN-B domain. 2 disulfides stabilise this stretch: Cys2471–Cys2503 and Cys2491–Cys2505. The GPS stretch occupies residues 2471 to 2521 (CVQWDPPGPTDQHGMWTARDCELVHRNGSHARCRCSRTGTFGVLMDASPRE). A helical membrane pass occupies residues 2532 to 2552 (VFTHVVVAVSVTALVLTAAVL). Residues 2553-2563 (LSLRSLKSNVR) are Cytoplasmic-facing. The chain crosses the membrane as a helical span at residues 2564 to 2584 (GIHANVAAALGVAELLFLLGI). The Extracellular portion of the chain corresponds to 2585–2592 (HRTHNQLL). The helical transmembrane segment at 2593 to 2613 (CTAVAILLHYFFLSTFAWLLV) threads the bilayer. Residues 2614 to 2634 (QGLHLYRMQVEPRNVDRGAMR) are Cytoplasmic-facing. The helical transmembrane segment at 2635–2655 (FYHALGWGVPAVLLGLAVGLD) threads the bilayer. At 2656-2673 (PEGYGNPDFCWISIHEPL) the chain is on the extracellular side. A helical membrane pass occupies residues 2674–2694 (IWSFAGPIVLVIVMNGTMFLL). Over 2695-2716 (AARTSCSTGQREAKKTSVLTLR) the chain is Cytoplasmic. A helical membrane pass occupies residues 2717-2737 (SSFLLLLLVSASWLFGLLAVN). Residues 2738–2744 (HSILAFH) lie on the Extracellular side of the membrane. A helical transmembrane segment spans residues 2745 to 2765 (YLHAGLCGLQGLAVLLLFCVL). The Cytoplasmic segment spans residues 2766-3301 (NADARAAWTP…SEVPRSEGHS (536 aa)). Disordered stretches follow at residues 2823–2844 (SSAR…YLRD), 2879–2919 (AGAD…RPLR), and 2969–2992 (SNKD…TSLG). A compositionally biased stretch (acidic residues) spans 2881-2891 (ADSDSDSDLSL). Residues 2910 to 2919 (TRGRFQRPLR) show a composition bias toward basic residues. The residue at position 3042 (Tyr3042) is a Phosphotyrosine. A disordered region spans residues 3083-3301 (APVLHPLSRP…SEVPRSEGHS (219 aa)). Residue Ser3090 is modified to Phosphoserine. Residues 3094-3111 (SQERLDTAPARLEARDRG) are compositionally biased toward basic and acidic residues. Low complexity-rich tracts occupy residues 3168–3189 (SPQR…SLSR) and 3239–3261 (LSSI…STPS). Residues 3276-3289 (TPRSATSHSISELS) are compositionally biased toward polar residues.

It belongs to the G-protein coupled receptor 2 family. LN-TM7 subfamily. As to expression, expressed in the CNS and in the eye.

It localises to the cell membrane. Its function is as follows. Receptor that may have an important role in cell/cell signaling during nervous system formation. The protein is Cadherin EGF LAG seven-pass G-type receptor 3 (Celsr3) of Mus musculus (Mouse).